Here is a 602-residue protein sequence, read N- to C-terminus: Cytokine-like nuclear factor N-PAC (602 aa).

Phosphoserine is present on residues Ser-8 and Ser-10. Residues 22–81 (PKDLIWAKMKGFTPWPGMIVDPPLDLLSQQRRANTKCVFFFGSRNFAWIEENNIKPFEGP) enclose the PWWP domain. A disordered region spans residues 162 to 262 (GSPDEGDGLD…ASSTPTGRRR (101 aa)). Polar residues-rich tracts occupy residues 176 to 188 (ADSS…SPAV), 204 to 217 (AATS…SAKS), and 224 to 233 (SAQQSPSGPS). Phosphoserine occurs at positions 224, 228, and 243. The tract at residues 309–602 (RDIVPSEQTF…SSAVFVRSRF (294 aa)) is dehydrogenase domain. NAD(+) contacts are provided by residues 319–333 (GFLG…IVKD), Thr-411, and Arg-554.

It belongs to the HIBADH-related family. NP60 subfamily. As to quaternary structure, binds to mononucleosomes. Interacts with male-specific lethal (MSL) histone acetyltransferase complex at least composed of mof, msl-1, msl-2 and msl-3.

It localises to the chromosome. Nucleosome-destabilizing factor that is recruited to genes during transcriptional activation and colocalizes with a subset of trimethylated 'Lys-36' histone H3 (H3K36me3)-enriched regions. Binds DNA (in vitro). Facilitates Pol II transcription through nucleosomes. Facilitates male-specific lethal (MSL) histone acetyltransferase complex targeting to active genes on the X chromosome. Stimulates the acetylation of 'Lys-56' of nucleosomal histone H3 (H3K56ac) by nej. May have oxidoreductase activity. The polypeptide is Cytokine-like nuclear factor N-PAC (Drosophila melanogaster (Fruit fly)).